The sequence spans 508 residues: Pancreatic alpha-amylase (508 aa).

The N-terminal stretch at 1 to 15 (MKFVLLLSLIGFCWA) is a signal peptide. A Pyrrolidone carboxylic acid modification is found at glutamine 16. 3 disulfide bridges follow: cysteine 43/cysteine 101, cysteine 85/cysteine 130, and cysteine 156/cysteine 172. Ca(2+)-binding residues include asparagine 115, arginine 170, and aspartate 179. Arginine 207 contacts chloride. Aspartate 209 acts as the Nucleophile in catalysis. Residue histidine 213 participates in Ca(2+) binding. Glutamate 245 functions as the Proton donor in the catalytic mechanism. Asparagine 310 and arginine 349 together coordinate chloride. Disulfide bonds link cysteine 390–cysteine 396 and cysteine 462–cysteine 474.

This sequence belongs to the glycosyl hydrolase 13 family. Monomer. Ca(2+) is required as a cofactor. The cofactor is chloride.

The protein resides in the secreted. It localises to the extracellular space. The enzyme catalyses Endohydrolysis of (1-&gt;4)-alpha-D-glucosidic linkages in polysaccharides containing three or more (1-&gt;4)-alpha-linked D-glucose units.. This Rattus norvegicus (Rat) protein is Pancreatic alpha-amylase (Amy2).